Reading from the N-terminus, the 694-residue chain is MAKINTQYSHPSRTHLKVKTSDRDLNRAENGLSRAHSSSEETSSVLQPGIAMETRGLADSGQGSFTGQGIARLSRLIFLLRRWAARHVHHQDQGPDSFPDRFRGAELKEVSSQESNAQANVGSQEPADRGRSAWPLAKCNTNTSNNTEEEKKTKKKDAIVVDPSSNLYYRWLTAIALPVFYNWYLLICRACFDELQSEYLMLWLVLDYSADVLYVLDVLVRARTGFLEQGLMVSDTNRLWQHYKTTTQFKLDVLSLVPTDLAYLKVGTNYPEVRFNRLLKFSRLFEFFDRTETRTNYPNMFRIGNLVLYILIIIHWNACIYFAISKFIGFGTDSWVYPNISIPEHGRLSRKYIYSLYWSTLTLTTIGETPPPVKDEEYLFVVVDFLVGVLIFATIVGNVGSMISNMNASRAEFQAKIDSIKQYMQFRKVTKDLETRVIRWFDYLWANKKTVDEKEVLKSLPDKLKAEIAINVHLDTLKKVRIFQDCEAGLLVELVLKLRPTVFSPGDYICKKGDIGKEMYIINEGKLAVVADDGVTQFVVLSDGSYFGEISILNIKGSKSGNRRTANIRSIGYSDLFCLSKDDLMEALTEYPEAKKALEEKGRQILMKDNLIDEELARAGADPKDLEEKVEQLGSSLDTLQTRFARLLAEYNATQMKMKQRLSQLESQVKGGGDKPLADGEVPGDATKTEDKQQ.

Polar residues-rich tracts occupy residues 1–11 and 112–123; these read MAKINTQYSHP and SQESNAQANVGS. Disordered regions lie at residues 1–24 and 109–152; these read MAKINTQYSHPSRTHLKVKTSDRD and EVSS…EEKK. Residues 1 to 170 lie on the Cytoplasmic side of the membrane; the sequence is MAKINTQYSH…VDPSSNLYYR (170 aa). Residues 171–192 traverse the membrane as a helical segment; the sequence is WLTAIALPVFYNWYLLICRACF. Over 193-198 the chain is Extracellular; that stretch reads DELQSE. Residues 199 to 219 traverse the membrane as a helical segment; that stretch reads YLMLWLVLDYSADVLYVLDVL. The Cytoplasmic segment spans residues 220–246; that stretch reads VRARTGFLEQGLMVSDTNRLWQHYKTT. Residues 247-266 traverse the membrane as a helical segment; sequence TQFKLDVLSLVPTDLAYLKV. Residues 267–270 lie on the Extracellular side of the membrane; that stretch reads GTNY. A helical transmembrane segment spans residues 271–288; that stretch reads PEVRFNRLLKFSRLFEFF. Over 289 to 298 the chain is Cytoplasmic; the sequence is DRTETRTNYP. The interval 298-406 is ion conduction pathway; that stretch reads PNMFRIGNLV…GNVGSMISNM (109 aa). A helical membrane pass occupies residues 299-321; that stretch reads NMFRIGNLVLYILIIIHWNACIY. Residues 322-347 lie on the Extracellular side of the membrane; that stretch reads FAISKFIGFGTDSWVYPNISIPEHGR. Asn339 is a glycosylation site (N-linked (GalNAc...) asparagine). 2 helical membrane-spanning segments follow: residues 348–378 and 379–403; these read LSRKYIYSLYWSTLTLTTIGETPPPVKDEEY and LFVVVDFLVGVLIFATIVGNVGSMI. Residues 365-368 form a selectivity filter region; it reads TIGE. Over 404-694 the chain is Cytoplasmic; it reads SNMNASRAEF…DATKTEDKQQ (291 aa). The segment at 408–485 is C-linker; the sequence is ASRAEFQAKI…TLKKVRIFQD (78 aa). The segment at 488-608 is cyclic nucleotide-binding domain; the sequence is AGLLVELVLK…EEKGRQILMK (121 aa). Gly548, Glu549, Ser551, Arg564, Thr565, and Asp609 together coordinate 3',5'-cyclic GMP. Positions 626–669 form a coiled coil; sequence LEEKVEQLGSSLDTLQTRFARLLAEYNATQMKMKQRLSQLESQV. A disordered region spans residues 662–694; it reads LSQLESQVKGGGDKPLADGEVPGDATKTEDKQQ.

The protein belongs to the cyclic nucleotide-gated cation channel (TC 1.A.1.5) family. CNGA3 subfamily. As to quaternary structure, forms heterotetrameric channels composed of CNGA3 and CNGB3 subunits with 3:1 stoichiometry. In terms of tissue distribution, prominently expressed in retina.

Its subcellular location is the cell membrane. It carries out the reaction Ca(2+)(in) = Ca(2+)(out). The catalysed reaction is Na(+)(in) = Na(+)(out). It catalyses the reaction K(+)(in) = K(+)(out). The enzyme catalyses NH4(+)(in) = NH4(+)(out). It carries out the reaction Rb(+)(in) = Rb(+)(out). The catalysed reaction is Li(+)(in) = Li(+)(out). It catalyses the reaction Cs(+)(in) = Cs(+)(out). Inhibited by L-cis-diltiazem. Pore-forming subunit of the cone cyclic nucleotide-gated channel. Mediates cone photoresponses at bright light converting transient changes in intracellular cGMP levels into electrical signals. In the dark, cGMP levels are high and keep the channel open enabling a steady inward current carried by Na(+) and Ca(2+) ions that leads to membrane depolarization and neurotransmitter release from synaptic terminals. Upon photon absorption cGMP levels decline leading to channel closure and membrane hyperpolarization that ultimately slows neurotransmitter release and signals the presence of light, the end point of the phototransduction cascade. Pore-forming subunit of the gustatory cyclic nucleotide-gated channel. In the taste buds, may sense oral extracellular pH and conduct ion currents that modulate the excitability of taste cells. Conducts cGMP- and cAMP-gated ion currents, with permeability for monovalent and divalent cations. The chain is Cyclic nucleotide-gated channel alpha-3 from Homo sapiens (Human).